We begin with the raw amino-acid sequence, 512 residues long: MDLKESPSEGSLQPSSIQIFANTSTLHGIRHIFVYGPLTIRRVLWAVAFVGSLGLLLVESSERVSYYFSYQHVTKVDEVVAQSLVFPAVTLCNLNGFRFSRLTTNDLYHAGELLALLDVNLQIPDPHLADPSVLEALRQKANFKHYKPKQFSMLEFLHRVGHDLKDMMLYCKFKGQECGHQDFTTVFTKYGKCYMFNSGEDGKPLLTTVKGGTGNGLEIMLDIQQDEYLPIWGETEETTFEAGVKVQIHSQSEPPFIQELGFGVAPGFQTFVATQEQRLTYLPPPWGECRSSEMGLDFFPVYSITACRIDCETRYIVENCNCRMVHMPGDAPFCTPEQHKECAEPALGLLAEKDSNYCLCRTPCNLTRYNKELSMVKIPSKTSAKYLEKKFNKSEKYISENILVLDIFFEALNYETIEQKKAYEVAALLGDIGGQMGLFIGASILTILELFDYIYELIKEKLLDLLGKEEDEGSHDENVSTCDTMPNHSETISHTVNVPLQTTLGTLEEIAC.

Topologically, residues 1–42 (MDLKESPSEGSLQPSSIQIFANTSTLHGIRHIFVYGPLTIRR) are cytoplasmic. A phosphoserine mark is found at Ser8 and Ser11. The helical transmembrane segment at 43–64 (VLWAVAFVGSLGLLLVESSERV) threads the bilayer. The Extracellular portion of the chain corresponds to 65–424 (SYYFSYQHVT…ETIEQKKAYE (360 aa)). Disulfide bonds link Cys92-Cys193, Cys289-Cys364, Cys307-Cys360, Cys311-Cys358, Cys320-Cys342, and Cys322-Cys334. 2 N-linked (GlcNAc...) asparagine glycosylation sites follow: Asn365 and Asn392. The chain crosses the membrane as a helical span at residues 425-439 (VAALLGDIGGQMGLF). Topologically, residues 440 to 512 (IGASILTILE…TLGTLEEIAC (73 aa)) are cytoplasmic. A GAS motif; ion selectivity filter motif is present at residues 441–443 (GAS).

The protein belongs to the amiloride-sensitive sodium channel (TC 1.A.6) family. ASIC2 subfamily. Can form homotrimers. Heterotrimer; forms functional heterotrimers producing channel with different properties. Forms heterotrimers with ASIC1; while ASIC1 determines current amplitude, ASIC2 influences the properties of the current. Forms heterotrimers with ASIC3; resulting in channels with distinct properties. Interacts with STOM; STOM regulates the gating of ASIC2-containing channels. Interacts with PICK1; promotes ASIC3 phosphorylation by PKC and activation of ASIC2/ASIC3 heterotrimers. In terms of tissue distribution, expressed in brain, cerebellum, trigeminal sensory ganglia and also detected in testis.

The protein resides in the cell membrane. The enzyme catalyses Na(+)(in) = Na(+)(out). It carries out the reaction K(+)(in) = K(+)(out). The catalysed reaction is Li(+)(in) = Li(+)(out). Its activity is regulated as follows. Inhibited by the diuretic drug amiloride. Inhibited by gadolinium ions, the heterotrimer with ASIC3 being more sensitive. Heterotrimer composed of ASIC1 and ASIC2 are inhibited by the snake venom mambalgin-1. Functionally, forms pH-gated trimeric sodium channels that act as postsynaptic excitatory sensors in the nervous system. Upon extracellular acidification, these channels generate rapid, transient inward currents that fully desensitize. Highly selective for sodium, they are permeable to other cations. By forming heterotrimeric channels with ASIC1, could contribute to synaptic plasticity, learning, and memory. Additionally, as acid sensors at nerve terminals, plays a role in mechanosensation and phototransduction. In Homo sapiens (Human), this protein is Acid-sensing ion channel 2.